The primary structure comprises 163 residues: Putative 4-hydroxy-4-methyl-2-oxoglutarate aldolase (163 aa).

Residues G76–I79 and R98 contribute to the substrate site. An a divalent metal cation-binding site is contributed by D99.

It belongs to the class II aldolase/RraA-like family. Homotrimer. The cofactor is a divalent metal cation.

It carries out the reaction 4-hydroxy-4-methyl-2-oxoglutarate = 2 pyruvate. The enzyme catalyses oxaloacetate + H(+) = pyruvate + CO2. In terms of biological role, catalyzes the aldol cleavage of 4-hydroxy-4-methyl-2-oxoglutarate (HMG) into 2 molecules of pyruvate. Also contains a secondary oxaloacetate (OAA) decarboxylase activity due to the common pyruvate enolate transition state formed following C-C bond cleavage in the retro-aldol and decarboxylation reactions. The chain is Putative 4-hydroxy-4-methyl-2-oxoglutarate aldolase from Pseudomonas fluorescens (strain SBW25).